The following is an 81-amino-acid chain: MAGSTGERPFSDIITSIRYWVIHSVTIPSLFVGGWIFVSTGIVYDIFGTPRPSEYFTETRQQAPLISDRFNALEQMDQFTK.

The chain crosses the membrane as a helical span at residues 21–35 (VIHSVTIPSLFVGGW). Histidine 23 serves as a coordination point for heme.

The protein belongs to the PsbE/PsbF family. As to quaternary structure, heterodimer of an alpha subunit and a beta subunit. PSII is composed of 1 copy each of membrane proteins PsbA, PsbB, PsbC, PsbD, PsbE, PsbF, PsbH, PsbI, PsbJ, PsbK, PsbL, PsbM, PsbT, PsbY, PsbZ, Psb30/Ycf12, at least 3 peripheral proteins of the oxygen-evolving complex and a large number of cofactors. It forms dimeric complexes. It depends on heme b as a cofactor.

The protein resides in the plastid. It is found in the chloroplast thylakoid membrane. Its function is as follows. This b-type cytochrome is tightly associated with the reaction center of photosystem II (PSII). PSII is a light-driven water:plastoquinone oxidoreductase that uses light energy to abstract electrons from H(2)O, generating O(2) and a proton gradient subsequently used for ATP formation. It consists of a core antenna complex that captures photons, and an electron transfer chain that converts photonic excitation into a charge separation. The polypeptide is Cytochrome b559 subunit alpha (Euglena gracilis).